A 206-amino-acid chain; its full sequence is Small ribosomal subunit protein uS4 (206 aa).

The disordered stretch occupies residues 28 to 48 (YMERRPYGPGEHGRARKKQDS). The S4 RNA-binding domain maps to 95–160 (MRLDALVLRA…MPPFQVAAAG (66 aa)).

Belongs to the universal ribosomal protein uS4 family. Part of the 30S ribosomal subunit. Contacts protein S5. The interaction surface between S4 and S5 is involved in control of translational fidelity.

Its function is as follows. One of the primary rRNA binding proteins, it binds directly to 16S rRNA where it nucleates assembly of the body of the 30S subunit. In terms of biological role, with S5 and S12 plays an important role in translational accuracy. The sequence is that of Small ribosomal subunit protein uS4 from Paenarthrobacter aurescens (strain TC1).